Reading from the N-terminus, the 1073-residue chain is MAAAAEAAAEPLVSGLARLLQDTGDLVLDGSSTLTLLTPTLQHLTRVFEQHLGSRNQHRGFVALPSHPAETTAILQAQFLFDMLQKTHSLKLIHVPNCALQSTVKIFPFKSLRHLELRSVPPHCLRGLRFVYSQLESLTCSKCVSTLEEIISACGGDLSCALPWLELQTVNFSYNSITALDDSLQLLNALRVLDLSHNKVQDCEHYLTTLSELEYLNLAYNFLSKVPNLGIFSQSKLLTLILRNNELDSINGVEQLVNLQHLDVAYNLLLEHAQLAPLSTLHYLKKLHLEGNPLWFHQNHRSATLVHVSPRAASSNFLLDGEPLSSSDLMHLPKLVPSVSQSIHTSTSEKTILDRNALDSSCAADFSDSQSPAENVAVRLPRKKGKGKVKVRRASISEPSDTEHESQALPFSAGLVLQHQKEMERMDSFRDRFGVDWLQYKRLEEHNQVSVICRSRSADETTGRPAAVDLQSESFDPKQVKPRLSPKESSPAFHNAGAEEEPEVQPGEPPGGEQREEEADELMLGEEEDEKPEVDLCQPVLVSQIEGEGDPESDWIFLRVTARHVIEVELKAARVLHKLELKCLQKIETSEMTWKRMDLERVFPVLTLHFTYIRKDRQKRKYVVLDDCPEQCLQCVLEVLSPVVEENWRNQDQEKESLRLQCLKCKHEFLQSLAPWQQGPYPAETGDTKNLETLVALNQDASAAGEPIACPSCSSDHVVILPSEVSSSTPVPPSHDGTSEDLSDSALEGGSQQEGPEEVPALPRESGKFYIGGEDSSEMDTSNSTRTPELSGEHDSTIQSSSHSTDGGYGKKEQGMKSQYLSLSHRDTNGGSLMGSYRYSASRGPTSSQLSMTSDSEETWNLSPSANSALNKRDFRSVDHRLKLYLDMEVFEENDEEFQCFLKVTMVKFGRQGEFLSILVASNLRIYVLEVTGVIRGQPADWLKKDDSHYLSDISHLEVGLCHQSLRMEFENPKASYNLLIRSQSCCDQFLQTLTYLMQELPSKHRSKVKEIPTVEMNPQHWLWPLLDSKNTDSAAAGGTCFFYLLAYLIQEYSAPNWTQFKLRPCCQIDRTN.

6 LRR repeats span residues 166–187 (ELQT…LQLL), 189–210 (ALRV…LTTL), 212–233 (ELEY…GIFS), 236–257 (KLLT…EQLV), 258–279 (NLQH…APLS), and 283–304 (YLKK…RSAT). Disordered regions lie at residues 389 to 409 (VKVR…SQAL), 455 to 533 (SRSA…EKPE), 724 to 817 (EVSS…QGMK), and 834 to 859 (MGSY…SEET). The span at 515–532 (REEEADELMLGEEEDEKP) shows a compositional bias: acidic residues. Composition is skewed to polar residues over residues 779–788 (MDTSNSTRTP) and 843–859 (RGPT…SEET).

This sequence belongs to the STK11IP family.

It localises to the cytoplasm. The sequence is that of Serine/threonine-protein kinase 11-interacting protein (STK11IP) from Gallus gallus (Chicken).